Consider the following 212-residue polypeptide: Adenylate kinase (212 aa).

Position 10 to 15 (10 to 15 (GAGKGT)) interacts with ATP. The tract at residues 30-59 (STGDMFRAAMANQTEMGVLAKSYIDKGELV) is NMP. Residues Thr31, Arg36, 57–59 (ELV), 86–89 (GYPR), and Gln93 contribute to the AMP site. Residues 127–159 (GRIIHRVTGETFHKVFNPPVDYKEEDYYQREDD) form an LID region. Residues Arg128 and 137-138 (TF) contribute to the ATP site. Positions 156 and 167 each coordinate AMP. An ATP-binding site is contributed by Gln195.

Belongs to the adenylate kinase family. In terms of assembly, monomer.

It is found in the cytoplasm. The catalysed reaction is AMP + ATP = 2 ADP. Its pathway is purine metabolism; AMP biosynthesis via salvage pathway; AMP from ADP: step 1/1. Functionally, catalyzes the reversible transfer of the terminal phosphate group between ATP and AMP. Plays an important role in cellular energy homeostasis and in adenine nucleotide metabolism. The protein is Adenylate kinase of Streptococcus pneumoniae serotype 4 (strain ATCC BAA-334 / TIGR4).